A 299-amino-acid polypeptide reads, in one-letter code: 4-hydroxy-tetrahydrodipicolinate synthase (299 aa).

Threonine 45 is a binding site for pyruvate. Tyrosine 133 serves as the catalytic Proton donor/acceptor. The active-site Schiff-base intermediate with substrate is the lysine 161. Isoleucine 203 serves as a coordination point for pyruvate.

Belongs to the DapA family. Homotetramer; dimer of dimers.

It is found in the cytoplasm. It carries out the reaction L-aspartate 4-semialdehyde + pyruvate = (2S,4S)-4-hydroxy-2,3,4,5-tetrahydrodipicolinate + H2O + H(+). It participates in amino-acid biosynthesis; L-lysine biosynthesis via DAP pathway; (S)-tetrahydrodipicolinate from L-aspartate: step 3/4. In terms of biological role, catalyzes the condensation of (S)-aspartate-beta-semialdehyde [(S)-ASA] and pyruvate to 4-hydroxy-tetrahydrodipicolinate (HTPA). The polypeptide is 4-hydroxy-tetrahydrodipicolinate synthase (Blochmanniella pennsylvanica (strain BPEN)).